Here is a 215-residue protein sequence, read N- to C-terminus: Pyrrolidone-carboxylate peptidase (215 aa).

Catalysis depends on residues glutamate 81, cysteine 144, and histidine 168.

Belongs to the peptidase C15 family. As to quaternary structure, homotetramer.

It is found in the cytoplasm. The catalysed reaction is Release of an N-terminal pyroglutamyl group from a polypeptide, the second amino acid generally not being Pro.. In terms of biological role, removes 5-oxoproline from various penultimate amino acid residues except L-proline. The chain is Pyrrolidone-carboxylate peptidase (pcp) from Bacillus subtilis (strain 168).